Here is a 482-residue protein sequence, read N- to C-terminus: Signal recognition particle protein (482 aa).

Residues 107 to 114, 189 to 193, and 247 to 250 contribute to the GTP site; these read GLQGTGKT, DTAGR, and TKLD. Disordered regions lie at residues 380-413 and 452-482; these read MTTE…TDVS and FGGQ…FGQL. Residues 452 to 468 are compositionally biased toward gly residues; the sequence is FGGQPGPGFRGYRGGGG. Residues 469–482 are compositionally biased toward basic residues; the sequence is KPKKKKKKKGFGQL.

The protein belongs to the GTP-binding SRP family. SRP54 subfamily. As to quaternary structure, part of the signal recognition particle protein translocation system, which is composed of SRP and FtsY.

The protein localises to the cytoplasm. It carries out the reaction GTP + H2O = GDP + phosphate + H(+). Its function is as follows. Involved in targeting and insertion of nascent membrane proteins into the cytoplasmic membrane. Binds to the hydrophobic signal sequence of the ribosome-nascent chain (RNC) as it emerges from the ribosomes. The SRP-RNC complex is then targeted to the cytoplasmic membrane where it interacts with the SRP receptor FtsY. The protein is Signal recognition particle protein of Synechocystis sp. (strain ATCC 27184 / PCC 6803 / Kazusa).